The chain runs to 340 residues: Extracellular matrix protein-binding protein emp (340 aa).

The signal sequence occupies residues 1-26 (MKKKLLVLTMSTLFATQIMNSNHAKA).

The protein localises to the cell surface. Its function is as follows. Adhesin that binds to the host cell extracellular matrix proteins fibronectin, fibrinogen, collagen, and vitronectin. The protein is Extracellular matrix protein-binding protein emp (emp) of Staphylococcus aureus (strain USA300).